We begin with the raw amino-acid sequence, 471 residues long: F-box only protein 3 (471 aa).

The 47-residue stretch at 10–56 folds into the F-box domain; it reads PLTLESLPTDPLLLILSFLDYRDLINCCYVSRRLSQLSSHDPLWRRH. The ApaG domain occupies 278-408; that stretch reads VATTGDITVS…FHMACPTFRV (131 aa). Positions 419 to 451 are enriched in acidic residues; the sequence is EYEEMEEEEEEEEEEDEDDDSADMDESDEDDEE. A disordered region spans residues 419–455; the sequence is EYEEMEEEEEEEEEEDEDDDSADMDESDEDDEEERRR.

In terms of assembly, part of a SCF (SKP1-cullin-F-box) protein ligase complex SCF(FBXO3) consisting of FBXO3, SKP1, CUL1 and RBX1. Interacts with PML, interaction is direct and takes place either alone or within the SCF complex. As to quaternary structure, (Microbial infection) Interacts (via ApaG domain) with Rift valley fever virus NSs helical filament; this interaction forms a filamentous E3 which mediates degradation of TFIIH complex through interaction with GT2H1.

The protein resides in the nucleus. The protein operates within protein modification; protein ubiquitination. Substrate recognition component of the SCF (SKP1-CUL1-F-box protein)-type E3 ubiquitin ligase complex, SCF(FBXO3), which mediates the ubiquitination and subsequent proteasomal degradation of target proteins. Mediates the ubiquitination of HIPK2 and probably that of EP300, leading to rapid degradation by the proteasome. In the presence of PML, HIPK2 ubiquitination still occurs, but degradation is prevented. PML, HIPK2 and FBXO3 may act synergically to activate p53/TP53-dependent transactivation. The SCF(FBXO3) also acts as a regulator of inflammation by mediating ubiquitination and degradation of FBXL2 in response to lipopolysaccharide (LPS). The SCF(FBXO3) complex specifically recognizes FBXL2 phosphorylated at 'Thr-404' and promotes its ubiquitination. Functionally, (Microbial infection) Associates with the Rift valley fever virus NSs to form a remodeled E3 ligase that triggers efficient proteasomal degradation of targeted proteins. The filamentous E3 ligase targets the TFIIH complex leading to robust inhibition of antiviral immunity and enhances viral pathogenesis. This Homo sapiens (Human) protein is F-box only protein 3.